Reading from the N-terminus, the 950-residue chain is General transcription factor II-I repeat domain-containing protein 2 (950 aa).

GTF2I-like repeat units lie at residues 100–194 (QVDS…QPGG) and 324–418 (LSSL…SNVG).

Belongs to the TFII-I family.

The protein localises to the nucleus. This is General transcription factor II-I repeat domain-containing protein 2 (GTF2IRD2) from Bos taurus (Bovine).